The sequence spans 345 residues: Phosphate import ATP-binding protein PstB 2 (345 aa).

The tract at residues Met-1–Glu-57 is disordered. Over residues Glu-8–Ala-18 the composition is skewed to basic and acidic residues. The span at Asp-19–Ala-35 shows a compositional bias: low complexity. The segment covering Gly-42–Glu-52 has biased composition (gly residues). An ABC transporter domain is found at Val-86–Val-340. ATP is bound at residue Gly-118 to Ser-125.

Belongs to the ABC transporter superfamily. Phosphate importer (TC 3.A.1.7) family. The complex is composed of two ATP-binding proteins (PstB), two transmembrane proteins (PstC and PstA) and a solute-binding protein (PstS).

The protein resides in the cell membrane. It carries out the reaction phosphate(out) + ATP + H2O = ADP + 2 phosphate(in) + H(+). Its function is as follows. Part of the ABC transporter complex PstSACB involved in phosphate import. Responsible for energy coupling to the transport system. In Halobacterium salinarum (strain ATCC 700922 / JCM 11081 / NRC-1) (Halobacterium halobium), this protein is Phosphate import ATP-binding protein PstB 2.